The chain runs to 249 residues: Aspartate/glutamate leucyltransferase (249 aa).

Belongs to the R-transferase family. Bpt subfamily.

Its subcellular location is the cytoplasm. It catalyses the reaction N-terminal L-glutamyl-[protein] + L-leucyl-tRNA(Leu) = N-terminal L-leucyl-L-glutamyl-[protein] + tRNA(Leu) + H(+). The enzyme catalyses N-terminal L-aspartyl-[protein] + L-leucyl-tRNA(Leu) = N-terminal L-leucyl-L-aspartyl-[protein] + tRNA(Leu) + H(+). Functions in the N-end rule pathway of protein degradation where it conjugates Leu from its aminoacyl-tRNA to the N-termini of proteins containing an N-terminal aspartate or glutamate. The protein is Aspartate/glutamate leucyltransferase of Azorhizobium caulinodans (strain ATCC 43989 / DSM 5975 / JCM 20966 / LMG 6465 / NBRC 14845 / NCIMB 13405 / ORS 571).